A 329-amino-acid polypeptide reads, in one-letter code: ATP phosphoribosyltransferase regulatory subunit (329 aa).

The protein belongs to the class-II aminoacyl-tRNA synthetase family. HisZ subfamily. Heteromultimer composed of HisG and HisZ subunits.

Its subcellular location is the cytoplasm. It functions in the pathway amino-acid biosynthesis; L-histidine biosynthesis; L-histidine from 5-phospho-alpha-D-ribose 1-diphosphate: step 1/9. Required for the first step of histidine biosynthesis. May allow the feedback regulation of ATP phosphoribosyltransferase activity by histidine. This chain is ATP phosphoribosyltransferase regulatory subunit, found in Streptococcus gordonii (strain Challis / ATCC 35105 / BCRC 15272 / CH1 / DL1 / V288).